Here is a 607-residue protein sequence, read N- to C-terminus: Serine/threonine-protein kinase sid2 (607 aa).

4 positions are modified to phosphoserine: Ser-56, Ser-60, Ser-65, and Ser-86. Residues 93 to 108 (DRSGELSYKDNNHWSD) are compositionally biased toward basic and acidic residues. Positions 93–118 (DRSGELSYKDNNHWSDRSSTGSPRWE) are disordered. Positions 109–118 (RSSTGSPRWE) are enriched in polar residues. A Protein kinase domain is found at 208-508 (FQTITQVGQG…LKQVMQHPYF (301 aa)). Residues 214–222 (VGQGGYGSV) and Lys-237 each bind ATP. Tyr-219 is modified (phosphotyrosine). Asp-331 functions as the Proton acceptor in the catalytic mechanism. Ser-402 is modified (phosphoserine). The 81-residue stretch at 509–589 (SKIDWKNVRT…RHQKNSHPTS (81 aa)) folds into the AGC-kinase C-terminal domain. Positions 586-607 (HPTSSSSALSSPLSAPSFGTLL) are disordered. Low complexity predominate over residues 589–607 (SSSSALSSPLSAPSFGTLL).

This sequence belongs to the protein kinase superfamily. Ser/Thr protein kinase family. In terms of assembly, interacts with mob1 and cdc11.

It is found in the cytoplasm. The protein resides in the cytoskeleton. The protein localises to the microtubule organizing center. Its subcellular location is the spindle pole body. The enzyme catalyses L-seryl-[protein] + ATP = O-phospho-L-seryl-[protein] + ADP + H(+). It carries out the reaction L-threonyl-[protein] + ATP = O-phospho-L-threonyl-[protein] + ADP + H(+). Part of a signaling pathway. Required for initiation of medial ring constriction and septation. This chain is Serine/threonine-protein kinase sid2 (sid2), found in Schizosaccharomyces pombe (strain 972 / ATCC 24843) (Fission yeast).